Consider the following 124-residue polypeptide: Small ribosomal subunit protein uS13 (124 aa).

Residues Val98–Lys124 form a disordered region.

It belongs to the universal ribosomal protein uS13 family. Part of the 30S ribosomal subunit. Forms a loose heterodimer with protein S19. Forms two bridges to the 50S subunit in the 70S ribosome.

In terms of biological role, located at the top of the head of the 30S subunit, it contacts several helices of the 16S rRNA. In the 70S ribosome it contacts the 23S rRNA (bridge B1a) and protein L5 of the 50S subunit (bridge B1b), connecting the 2 subunits; these bridges are implicated in subunit movement. Contacts the tRNAs in the A and P-sites. The protein is Small ribosomal subunit protein uS13 of Dictyoglomus thermophilum (strain ATCC 35947 / DSM 3960 / H-6-12).